Reading from the N-terminus, the 1350-residue chain is Zinc finger protein Xfin (1350 aa).

One can recognise a KRAB domain in the interval 1 to 58; sequence MEEPKCLQREMYKSVMTENYQCVLSLGYPIRKPEIVSMMEVGEELWSKNDSARPGQKE. Residues 47-68 form a disordered region; the sequence is SKNDSARPGQKEVEGETPKESD. C2H2-type zinc fingers lie at residues 108–130, 136–158, 164–186, 192–214, 220–242, 248–270, 276–298, 326–348, 354–376, 382–404, 410–432, 438–460, 466–488, 503–525, 531–553, 559–581, 587–609, 615–637, 643–665, 671–693, 699–721, 750–772, 778–800, 806–828, 834–856, 862–884, 890–912, 918–940, 988–1010, 1016–1038, 1044–1066, 1136–1158, 1164–1186, 1192–1214, 1220–1242, 1248–1270, and 1276–1298; these read HICSHYGKLFSCYAAVVRHQRMH, HHCPHCKKSFVQRSDFIKHQRTH, YQCVECQKKFTERSALVNHQRTH, YTCLDCQKTFNQRSALTKHRRTH, YRCSVCSKSFIQNSDLVKHLRTH, YECPLCVKRFAESSALMKHKRTH, FRCSECSRSFTHNSDLTAHMRKH, YSCSKCRKTFKRWKSFLNHQQTH, YLCSHCNKGFIQNSDLVKHFRTH, YQCAECHKGFIQKSDLVKHLRTH, FKCSHCDKKFTERSALAKHQRTH, YKCSDCGKEFTQRSNLILHQRIH, YKCTLCDRTFIQNSDLVKHQKVH, HKCSKCDLTFSHWSTFMKHSKLH, FQCAECKKGFTQKSDLVKHIRVH, FKCLLCKKSFSQNSDLHKHWRIH, FPCYTCDKSFTERSALIKHHRTH, HKCSVCQKGFIQKSALTKHSRTH, YPCTQCGKSFIQNSDLVKHQRIH, YHCTECNKRFTEGSSLVKHRRTH, YRCPQCEKTFIQSSDLVKHLVVH, YPCTECGKVFHQRPALLKHLRTH, YPCNECDKSFFQTSDLVKHLRTH, YHCPECNKGFIQNSDLVKHQRTH, YTCSQCDKGFIQRSALTKHMRTH, YKCEQCQKCFIQNSDLVKHQRIH, YHCPDCDKRFTEGSSLIKHQRIH, YPCGVCGKSFSQSSNLLKHLKCH, FKCNDCGKCFAHRSVLIKHVRIH, YKCSQCTRSFIQKSDLVKHYRTH, YKCGLCERSFVEKSALSRHQRVH, YSCSECGKCFTHRSVFLKHWRMH, YTCKECGKSFSQSSALVKHVRIH, YPCSTCGKSFIQKSDLAKHQRIH, YTCTVCGKKFIDRSSVVKHSRTH, YKCNECTKGFVQKSDLVKHMRTH, and YGCNCCDRSFSTHSASVRHQRMC.

It belongs to the krueppel C2H2-type zinc-finger protein family. Phosphorylated. Phosphorylation enhances RNA binding. In terms of tissue distribution, expressed in oocytes, and in specialized cell types such as neural retina cones in adults.

It is found in the cytoplasm. Binds to poly-G sequences in RNA. May function in post-translational regulation processes. This Xenopus laevis (African clawed frog) protein is Zinc finger protein Xfin.